The primary structure comprises 88 residues: Beta-insect excitatory toxin LqhIT1a (88 aa).

A signal peptide spans 1–18 (MKFFLLFLVVLPIMGVLG). One can recognise an LCN-type CS-alpha/beta domain in the interval 20 to 83 (KNGYAVDSKG…ISGTTKKYCD (64 aa)). 4 disulfide bridges follow: Cys-34/Cys-55, Cys-40/Cys-60, Cys-44/Cys-62, and Cys-56/Cys-82.

Belongs to the long (4 C-C) scorpion toxin superfamily. Sodium channel inhibitor family. Beta subfamily. As to expression, expressed by the venom gland.

It is found in the secreted. In terms of biological role, excitatory insect toxins induce a spastic paralysis. They bind voltage-independently at site-4 of sodium channels (Nav) and shift the voltage of activation toward more negative potentials thereby affecting sodium channel activation and promoting spontaneous and repetitive firing. The protein is Beta-insect excitatory toxin LqhIT1a of Leiurus hebraeus (Hebrew deathstalker scorpion).